A 170-amino-acid chain; its full sequence is Endoribonuclease YbeY (170 aa).

Zn(2+) is bound by residues His128, His132, and His138.

The protein belongs to the endoribonuclease YbeY family. Requires Zn(2+) as cofactor.

Its subcellular location is the cytoplasm. In terms of biological role, single strand-specific metallo-endoribonuclease involved in late-stage 70S ribosome quality control and in maturation of the 3' terminus of the 16S rRNA. This chain is Endoribonuclease YbeY, found in Ruegeria sp. (strain TM1040) (Silicibacter sp.).